Here is a 422-residue protein sequence, read N- to C-terminus: Tyrosine-protein kinase STYK1 (422 aa).

The helical transmembrane segment at 26-46 (VIIVPTLLVTIFLILLGVILW) threads the bilayer. The 271-residue stretch at 114 to 384 (SEVLEQICSG…ELRLRLEAAI (271 aa)) folds into the Protein kinase domain. Residues 120 to 128 (ICSGSCGPI) and Lys147 contribute to the ATP site. Asp251 serves as the catalytic Proton acceptor.

Belongs to the protein kinase superfamily. Tyr protein kinase family. In terms of tissue distribution, widely expressed. Highly expressed in brain, placenta and prostate. Expressed in tumor cells such as hepatoma cells L-02, cervix carcinoma cells HeLa, ovary cancer cells Ho8910 and chronic myelogenous leukemia cells K-562, but not in other tumor cells such as epidermoid carcinoma (A-431). Undetectable in most normal lung tissues, widely expressed in lung cancers.

It localises to the membrane. The catalysed reaction is L-tyrosyl-[protein] + ATP = O-phospho-L-tyrosyl-[protein] + ADP + H(+). In terms of biological role, probable tyrosine protein-kinase, which has strong transforming capabilities on a variety of cell lines. When overexpressed, it can also induce tumor cell invasion as well as metastasis in distant organs. May act by activating both MAP kinase and phosphatidylinositol 3'-kinases (PI3K) pathways. This chain is Tyrosine-protein kinase STYK1 (STYK1), found in Homo sapiens (Human).